The sequence spans 654 residues: Probable protein phosphatase 2C 23 (654 aa).

The disordered stretch occupies residues 11–30 (CLTGGAGRNKKPELSILEPD). A Phosphoserine modification is found at Ser-147. A PPM-type phosphatase domain is found at 243–645 (DVSLESQNLQ…DDVSIVVISL (403 aa)). Residues Asp-280 and Gly-281 each contribute to the Mn(2+) site. The tract at residues 309–336 (DDPKTDAKSSDEADVENRDSSSEKKSKN) is disordered. Positions 573 and 636 each coordinate Mn(2+).

It belongs to the PP2C family. Mg(2+) serves as cofactor. Mn(2+) is required as a cofactor. Expressed in seedlings, roots, leaves, stems, young inflorescences, flowers and siliques.

The protein localises to the nucleus. The enzyme catalyses O-phospho-L-seryl-[protein] + H2O = L-seryl-[protein] + phosphate. It catalyses the reaction O-phospho-L-threonyl-[protein] + H2O = L-threonyl-[protein] + phosphate. Its function is as follows. Involved in leaf development regulation. The polypeptide is Probable protein phosphatase 2C 23 (PLL4) (Arabidopsis thaliana (Mouse-ear cress)).